Consider the following 229-residue polypeptide: 5'-methylthioadenosine/S-adenosylhomocysteine nucleosidase (229 aa).

The Proton acceptor role is filled by Glu12. Residues Gly78, Ile152, and 173–174 (ME) contribute to the substrate site. The active-site Proton donor is the Asp197.

The protein belongs to the PNP/UDP phosphorylase family. MtnN subfamily.

It carries out the reaction S-adenosyl-L-homocysteine + H2O = S-(5-deoxy-D-ribos-5-yl)-L-homocysteine + adenine. It catalyses the reaction S-methyl-5'-thioadenosine + H2O = 5-(methylsulfanyl)-D-ribose + adenine. The enzyme catalyses 5'-deoxyadenosine + H2O = 5-deoxy-D-ribose + adenine. The protein operates within amino-acid biosynthesis; L-methionine biosynthesis via salvage pathway; S-methyl-5-thio-alpha-D-ribose 1-phosphate from S-methyl-5'-thioadenosine (hydrolase route): step 1/2. Catalyzes the irreversible cleavage of the glycosidic bond in both 5'-methylthioadenosine (MTA) and S-adenosylhomocysteine (SAH/AdoHcy) to adenine and the corresponding thioribose, 5'-methylthioribose and S-ribosylhomocysteine, respectively. Also cleaves 5'-deoxyadenosine, a toxic by-product of radical S-adenosylmethionine (SAM) enzymes, into 5-deoxyribose and adenine. In Haemophilus influenzae (strain PittGG), this protein is 5'-methylthioadenosine/S-adenosylhomocysteine nucleosidase.